Consider the following 444-residue polypeptide: Serine carboxypeptidase-like 50 (444 aa).

The first 22 residues, 1–22 (MEQATTLFILLSTLLLAVSVES), serve as a signal peptide directing secretion. A disulfide bridge connects residues C79 and C308. S170 is a catalytic residue. A glycan (N-linked (GlcNAc...) asparagine) is linked at N263. D345 is a catalytic residue. Residue N361 is glycosylated (N-linked (GlcNAc...) asparagine). The active site involves H403.

The protein belongs to the peptidase S10 family. In terms of tissue distribution, ubiquitous.

It is found in the secreted. Probable carboxypeptidase. The polypeptide is Serine carboxypeptidase-like 50 (SCPL50) (Arabidopsis thaliana (Mouse-ear cress)).